The primary structure comprises 198 residues: Transmembrane gamma-carboxyglutamic acid protein 2 (198 aa).

The N-terminal stretch at 1-17 is a signal peptide; sequence MRGRPSLLLVYMGLATC. A propeptide spanning residues 18–51 is cleaved from the precursor; it reads LDTSPHREQNQVLDIFLDAPEAQSFLVGRRRFPR. In terms of domain architecture, Gla spans 52–98; the sequence is ANHWDLELLTPGNLERECLEERCSWEEAREYFEDNTLTERFWESYTY. At 52 to 111 the chain is on the extracellular side; sequence ANHWDLELLTPGNLERECLEERCSWEEAREYFEDNTLTERFWESYTYNGKGGRGRVDVAG. A disulfide bond links cysteine 69 and cysteine 74. 4-carboxyglutamate is present on glutamate 72. The helical transmembrane segment at 112 to 132 threads the bilayer; sequence LAVGLTSGILLIVLAGLGAFW. At 133–198 the chain is on the cytoplasmic side; it reads YLHYRRRRLR…PPYSSLRRPH (66 aa). Positions 156–198 are disordered; sequence PLSPQTPQSPPLPPGLPTYEQALAASGVHDAPPPPYSSLRRPH. Over residues 162–171 the composition is skewed to pro residues; that stretch reads PQSPPLPPGL. The LPXY motif; mediates binding to WW domain-containing proteins signature appears at 171 to 174; that stretch reads LPTY. The PPXY motif; mediates binding to WW domain-containing proteins signature appears at 188-191; the sequence is PPPY.

Interacts with NEDD4. Interacts with transcriptional coactivator YAP1. In terms of processing, gamma-carboxyglutamate residues are formed by vitamin K dependent carboxylation. These residues are essential for the binding of calcium.

The protein resides in the cell membrane. The polypeptide is Transmembrane gamma-carboxyglutamic acid protein 2 (Prrg2) (Mus musculus (Mouse)).